Reading from the N-terminus, the 277-residue chain is Ribosomal RNA small subunit methyltransferase A (277 aa).

S-adenosyl-L-methionine-binding residues include Asn-27, Leu-29, Gly-54, Glu-75, Asp-95, and Asn-118.

The protein belongs to the class I-like SAM-binding methyltransferase superfamily. rRNA adenine N(6)-methyltransferase family. RsmA subfamily.

The protein localises to the cytoplasm. It catalyses the reaction adenosine(1518)/adenosine(1519) in 16S rRNA + 4 S-adenosyl-L-methionine = N(6)-dimethyladenosine(1518)/N(6)-dimethyladenosine(1519) in 16S rRNA + 4 S-adenosyl-L-homocysteine + 4 H(+). Functionally, specifically dimethylates two adjacent adenosines (A1518 and A1519) in the loop of a conserved hairpin near the 3'-end of 16S rRNA in the 30S particle. May play a critical role in biogenesis of 30S subunits. The protein is Ribosomal RNA small subunit methyltransferase A of Chlamydia muridarum (strain MoPn / Nigg).